Consider the following 330-residue polypeptide: Beta-ketoacyl-[acyl-carrier-protein] synthase III (330 aa).

Catalysis depends on residues C116 and H257. Residues 258–262 form an ACP-binding region; it reads QANQR. N287 is an active-site residue.

This sequence belongs to the thiolase-like superfamily. FabH family. In terms of assembly, homodimer.

It is found in the cytoplasm. The enzyme catalyses malonyl-[ACP] + acetyl-CoA + H(+) = 3-oxobutanoyl-[ACP] + CO2 + CoA. Its pathway is lipid metabolism; fatty acid biosynthesis. Catalyzes the condensation reaction of fatty acid synthesis by the addition to an acyl acceptor of two carbons from malonyl-ACP. Catalyzes the first condensation reaction which initiates fatty acid synthesis and may therefore play a role in governing the total rate of fatty acid production. Possesses both acetoacetyl-ACP synthase and acetyl transacylase activities. Its substrate specificity determines the biosynthesis of branched-chain and/or straight-chain of fatty acids. This Synechocystis sp. (strain ATCC 27184 / PCC 6803 / Kazusa) protein is Beta-ketoacyl-[acyl-carrier-protein] synthase III.